A 238-amino-acid chain; its full sequence is Opacity protein opA68 (238 aa).

A signal peptide is located at residue Ala-1. Residues Asn-88–Gly-109 are disordered.

This sequence belongs to the opacity porin family.

The protein resides in the cell outer membrane. In terms of biological role, implicated in a number of adherence functions. OPA proteins are implicated in pathogenesis and are subject to phase variation. The sequence is that of Opacity protein opA68 from Neisseria gonorrhoeae.